Here is a 350-residue protein sequence, read N- to C-terminus: Histidinol-phosphate aminotransferase (350 aa).

Lys209 is subject to N6-(pyridoxal phosphate)lysine.

Belongs to the class-II pyridoxal-phosphate-dependent aminotransferase family. Histidinol-phosphate aminotransferase subfamily. As to quaternary structure, homodimer. Pyridoxal 5'-phosphate is required as a cofactor.

The enzyme catalyses L-histidinol phosphate + 2-oxoglutarate = 3-(imidazol-4-yl)-2-oxopropyl phosphate + L-glutamate. The protein operates within amino-acid biosynthesis; L-histidine biosynthesis; L-histidine from 5-phospho-alpha-D-ribose 1-diphosphate: step 7/9. This chain is Histidinol-phosphate aminotransferase, found in Citrifermentans bemidjiense (strain ATCC BAA-1014 / DSM 16622 / JCM 12645 / Bem) (Geobacter bemidjiensis).